Here is a 67-residue protein sequence, read N- to C-terminus: Non-specific lipid-transfer protein 2P (67 aa).

Intrachain disulfides connect C2/C34, C10/C24, C25/C60, and C36/C67.

Its function is as follows. Transfer lipids across membranes. May play a role in plant defense or in the biosynthesis of cuticle layers. The chain is Non-specific lipid-transfer protein 2P from Triticum aestivum (Wheat).